The chain runs to 316 residues: Protoheme IX farnesyltransferase (316 aa).

The disordered stretch occupies residues 1 to 21 (MAKSQALGNAPLTSTVAENAT). Positions 11-21 (PLTSTVAENAT) are enriched in polar residues. The next 9 helical transmembrane spans lie at 42 to 62 (VVAMLLLTALVGMCLAVPGIP), 67 to 87 (VILGLIGIGFQSAAAAAFNHV), 115 to 135 (VVFASTLMVMGFVILLELNAL), 136 to 156 (TAWLTMASLVGYAVVYTVWLK), 163 to 183 (IVIGGIAGAAPPLLGWTAVTG), 189 to 209 (ALLLVMLVFTWTPPHFWALAI), 235 to 255 (MVLLYTVMLFIVGLLPWLTGM), 256 to 276 (SGGVYLVGSSLLNLGFIGYAL), and 295 to 315 (IWHLLALFVVLLGDHWITSLM).

The protein belongs to the UbiA prenyltransferase family. Protoheme IX farnesyltransferase subfamily.

Its subcellular location is the cell inner membrane. The enzyme catalyses heme b + (2E,6E)-farnesyl diphosphate + H2O = Fe(II)-heme o + diphosphate. It functions in the pathway porphyrin-containing compound metabolism; heme O biosynthesis; heme O from protoheme: step 1/1. In terms of biological role, converts heme B (protoheme IX) to heme O by substitution of the vinyl group on carbon 2 of heme B porphyrin ring with a hydroxyethyl farnesyl side group. This chain is Protoheme IX farnesyltransferase, found in Photobacterium profundum (strain SS9).